Here is a 633-residue protein sequence, read N- to C-terminus: Probable potassium transport system protein Kup 2 (633 aa).

12 helical membrane passes run 18–38, 61–81, 107–127, 143–163, 173–193, 211–231, 255–275, 287–307, 345–365, 371–391, 402–422, and 427–447; these read FLALTIGAIGVVYGDIGTSPL, LVSLVLWTLTAIVTIKYVLFL, PVLMFFAGVLGAALFIGDAMI, VAPALHDYVLPISVVIILLLF, VSVFFGPITLVWFLMMAAAGV, AIGFLWNAGLIGFIVLGAIFL, WFAVVFPALALNYLGQGALVL, LMFPNWALLPMVILATAATII, IYLPLVNTILLTGVLALMLMF, LAPAYGVSITGAMVIDTILAF, ALTAIAVLLPLFNLELVFLGA, and VHHGGYVPILIAGTLITMMWT.

It belongs to the HAK/KUP transporter (TC 2.A.72) family.

The protein localises to the cell inner membrane. It catalyses the reaction K(+)(in) + H(+)(in) = K(+)(out) + H(+)(out). Transport of potassium into the cell. Likely operates as a K(+):H(+) symporter. In Rhizobium meliloti (strain 1021) (Ensifer meliloti), this protein is Probable potassium transport system protein Kup 2.